The primary structure comprises 223 residues: Ribose-5-phosphate isomerase A (223 aa).

Substrate is bound by residues 26–29, 82–85, and 95–98; these read TGST, DGAD, and KGGG. Glu104 functions as the Proton acceptor in the catalytic mechanism. Residue Lys122 coordinates substrate.

Belongs to the ribose 5-phosphate isomerase family. As to quaternary structure, homodimer.

It carries out the reaction aldehydo-D-ribose 5-phosphate = D-ribulose 5-phosphate. The protein operates within carbohydrate degradation; pentose phosphate pathway; D-ribose 5-phosphate from D-ribulose 5-phosphate (non-oxidative stage): step 1/1. In terms of biological role, catalyzes the reversible conversion of ribose-5-phosphate to ribulose 5-phosphate. The polypeptide is Ribose-5-phosphate isomerase A (Streptococcus agalactiae serotype Ia (strain ATCC 27591 / A909 / CDC SS700)).